Consider the following 351-residue polypeptide: Ribonucleoside-diphosphate reductase subunit beta (351 aa).

D94, E124, and H127 together coordinate Fe cation. Y131 is an active-site residue. Residues E191, E225, and H228 each coordinate Fe cation.

The protein belongs to the ribonucleoside diphosphate reductase small chain family. In terms of assembly, tetramer of two alpha and two beta subunits. Requires Fe cation as cofactor.

The catalysed reaction is a 2'-deoxyribonucleoside 5'-diphosphate + [thioredoxin]-disulfide + H2O = a ribonucleoside 5'-diphosphate + [thioredoxin]-dithiol. Its function is as follows. Provides the precursors necessary for DNA synthesis. Catalyzes the biosynthesis of deoxyribonucleotides from the corresponding ribonucleotides. The chain is Ribonucleoside-diphosphate reductase subunit beta (nrdB) from Treponema pallidum (strain Nichols).